Reading from the N-terminus, the 652-residue chain is Threonine--tRNA ligase (652 aa).

In terms of domain architecture, TGS spans 1 to 63 (MAEISLTFPD…TESGDFQLIT (63 aa)). The segment at 246–545 (DHRVIGRDLD…LIEMYKGAFP (300 aa)) is catalytic. Positions 340, 391, and 522 each coordinate Zn(2+).

This sequence belongs to the class-II aminoacyl-tRNA synthetase family. Homodimer. Zn(2+) serves as cofactor.

It localises to the cytoplasm. It carries out the reaction tRNA(Thr) + L-threonine + ATP = L-threonyl-tRNA(Thr) + AMP + diphosphate + H(+). Functionally, catalyzes the attachment of threonine to tRNA(Thr) in a two-step reaction: L-threonine is first activated by ATP to form Thr-AMP and then transferred to the acceptor end of tRNA(Thr). Also edits incorrectly charged L-seryl-tRNA(Thr). This is Threonine--tRNA ligase from Leuconostoc mesenteroides subsp. mesenteroides (strain ATCC 8293 / DSM 20343 / BCRC 11652 / CCM 1803 / JCM 6124 / NCDO 523 / NBRC 100496 / NCIMB 8023 / NCTC 12954 / NRRL B-1118 / 37Y).